We begin with the raw amino-acid sequence, 234 residues long: UPF0758 protein STH371 (234 aa).

Residues 110–232 (DLCNPRAVFE…YTSFRERGLL (123 aa)) form the MPN domain. 3 residues coordinate Zn(2+): His-181, His-183, and Asp-194. A JAMM motif motif is present at residues 181–194 (HNHPSGDPTPSRED).

The protein belongs to the UPF0758 family.

This is UPF0758 protein STH371 from Symbiobacterium thermophilum (strain DSM 24528 / JCM 14929 / IAM 14863 / T).